Here is a 59-residue protein sequence, read N- to C-terminus: Large ribosomal subunit protein uL30 (59 aa).

The protein belongs to the universal ribosomal protein uL30 family. As to quaternary structure, part of the 50S ribosomal subunit.

The chain is Large ribosomal subunit protein uL30 from Aliivibrio fischeri (strain MJ11) (Vibrio fischeri).